The following is a 342-amino-acid chain: Serpentine receptor class r-10 (342 aa).

Residues 1–11 are Extracellular-facing; that stretch reads MTGELWLTLVD. Residues 12 to 32 form a helical membrane-spanning segment; that stretch reads TADIVGFSMTFCVNIVLLFLL. Residues 33 to 38 are Cytoplasmic-facing; sequence KNRGKN. The helical transmembrane segment at 39–59 threads the bilayer; it reads LGTYKHLMAFFSVFSIFYAII. Residues 60–92 lie on the Extracellular side of the membrane; it reads ESILRPIMHIENATFFLISRKRFNYSTRLGKIN. N71 and N83 each carry an N-linked (GlcNAc...) asparagine glycan. Residues 93–113 traverse the membrane as a helical segment; sequence SAFYCACFATSFVVSGVHFVY. Over 114 to 131 the chain is Cytoplasmic; that stretch reads RFFASCKPHLLRSFNMPY. Residues 132–152 traverse the membrane as a helical segment; the sequence is LLLWPLGCSIPVMMWASVSYF. At 153 to 202 the chain is on the extracellular side; the sequence is LYPDTAFTEAAVTNVLNTHYHSIKKDNVSYIAYVYYQYDENGVRYVYLKN. N179 carries N-linked (GlcNAc...) asparagine glycosylation. A helical membrane pass occupies residues 203 to 223; that stretch reads LLGCFVHYFVMSATFVVMFIC. Over 224-257 the chain is Cytoplasmic; the sequence is GYLTWKTMRKHKTASDRTRQLQKQLFKALVLQTL. The helical transmembrane segment at 258-278 threads the bilayer; sequence IPTIFMYAPTGVMFIAPFFSI. Over 279 to 285 the chain is Extracellular; it reads NLNANAN. A helical transmembrane segment spans residues 286–306; that stretch reads FIVFCSFLYPGLDPLILILII. The Cytoplasmic portion of the chain corresponds to 307-342; that stretch reads RDFRQTVFKFFCLRKKNSVDESRSTTRANMSQVATH.

This sequence belongs to the nematode receptor-like protein str family. As to quaternary structure, interacts with odr-4.

The protein resides in the cell projection. It is found in the cilium membrane. Functionally, an odorant receptor which affects chemotaxis to the volatile odorant diacetyl. Specifies AWA neuronal cell fate via the odr-7 pathway. This chain is Serpentine receptor class r-10, found in Caenorhabditis briggsae.